A 403-amino-acid chain; its full sequence is Argininosuccinate synthase (403 aa).

Residues 10 to 18 (AYSGGLDTS) and A37 each bind ATP. Residues Y88 and S93 each coordinate L-citrulline. Residue G118 coordinates ATP. 3 residues coordinate L-aspartate: T120, N124, and D125. N124 contributes to the L-citrulline binding site. Positions 128, 178, 187, 263, and 275 each coordinate L-citrulline.

Belongs to the argininosuccinate synthase family. Type 1 subfamily. Homotetramer.

The protein localises to the cytoplasm. The catalysed reaction is L-citrulline + L-aspartate + ATP = 2-(N(omega)-L-arginino)succinate + AMP + diphosphate + H(+). The protein operates within amino-acid biosynthesis; L-arginine biosynthesis; L-arginine from L-ornithine and carbamoyl phosphate: step 2/3. The sequence is that of Argininosuccinate synthase from Marinobacter nauticus (strain ATCC 700491 / DSM 11845 / VT8) (Marinobacter aquaeolei).